We begin with the raw amino-acid sequence, 22 residues long: Cysteine protease inhibitor 4 (22 aa).

The protein belongs to the protease inhibitor I3 (leguminous Kunitz-type inhibitor) family. As to expression, tubers.

The protein resides in the vacuole. Functionally, inhibitor of papain (cysteine protease). Does not inhibit trypsin, chymotrypsin nor elastase (serine proteases). May protect the plant by inhibiting proteases of invading organisms. This chain is Cysteine protease inhibitor 4, found in Solanum tuberosum (Potato).